The sequence spans 280 residues: Urease accessory protein UreD (280 aa).

This sequence belongs to the UreD family. In terms of assembly, ureD, UreF and UreG form a complex that acts as a GTP-hydrolysis-dependent molecular chaperone, activating the urease apoprotein by helping to assemble the nickel containing metallocenter of UreC. The UreE protein probably delivers the nickel.

Its subcellular location is the cytoplasm. Its function is as follows. Required for maturation of urease via the functional incorporation of the urease nickel metallocenter. The polypeptide is Urease accessory protein UreD (Pseudomonas aeruginosa (strain UCBPP-PA14)).